Reading from the N-terminus, the 427-residue chain is UDP-N-acetylglucosamine 1-carboxyvinyltransferase (427 aa).

A phosphoenolpyruvate-binding site is contributed by 22-23; that stretch reads KN. Position 92 (arginine 92) interacts with UDP-N-acetyl-alpha-D-glucosamine. Aspartate 116 acts as the Proton donor in catalysis. The UDP-N-acetyl-alpha-D-glucosamine site is built by aspartate 312 and methionine 334.

This sequence belongs to the EPSP synthase family. MurA subfamily.

It localises to the cytoplasm. It catalyses the reaction phosphoenolpyruvate + UDP-N-acetyl-alpha-D-glucosamine = UDP-N-acetyl-3-O-(1-carboxyvinyl)-alpha-D-glucosamine + phosphate. It functions in the pathway cell wall biogenesis; peptidoglycan biosynthesis. Functionally, cell wall formation. Adds enolpyruvyl to UDP-N-acetylglucosamine. This is UDP-N-acetylglucosamine 1-carboxyvinyltransferase from Borrelia garinii subsp. bavariensis (strain ATCC BAA-2496 / DSM 23469 / PBi) (Borreliella bavariensis).